The primary structure comprises 275 residues: Large ribosomal subunit protein uL2 (275 aa).

Residues 221–275 (RGTAMNPVDHPHGGGEGRTGEGRVPVNPWGQPTKGYRTRSNKRTNSMIVQRRHKR) form a disordered region. The span at 229–241 (DHPHGGGEGRTGE) shows a compositional bias: basic and acidic residues.

Belongs to the universal ribosomal protein uL2 family. Part of the 50S ribosomal subunit. Forms a bridge to the 30S subunit in the 70S ribosome.

Its function is as follows. One of the primary rRNA binding proteins. Required for association of the 30S and 50S subunits to form the 70S ribosome, for tRNA binding and peptide bond formation. It has been suggested to have peptidyltransferase activity; this is somewhat controversial. Makes several contacts with the 16S rRNA in the 70S ribosome. The chain is Large ribosomal subunit protein uL2 from Dechloromonas aromatica (strain RCB).